The sequence spans 291 residues: tRNA dimethylallyltransferase (291 aa).

11 to 18 (GPTASGKS) is a binding site for ATP. Position 13–18 (13–18 (TASGKS)) interacts with substrate. The interaction with substrate tRNA stretch occupies residues 42 to 45 (DSMQ).

The protein belongs to the IPP transferase family. Monomer. Mg(2+) is required as a cofactor.

It catalyses the reaction adenosine(37) in tRNA + dimethylallyl diphosphate = N(6)-dimethylallyladenosine(37) in tRNA + diphosphate. Catalyzes the transfer of a dimethylallyl group onto the adenine at position 37 in tRNAs that read codons beginning with uridine, leading to the formation of N6-(dimethylallyl)adenosine (i(6)A). This Rubrobacter xylanophilus (strain DSM 9941 / JCM 11954 / NBRC 16129 / PRD-1) protein is tRNA dimethylallyltransferase.